The primary structure comprises 430 residues: Zinc finger and SCAN domain-containing protein 4 (430 aa).

The segment at 1–38 (MASDLRISFQGEPSRNDPGSENLEHKPSQGPAVQEEEE) is disordered. The 83-residue stretch at 44–126 (RTQLSLLQNS…KFMEDLTDES (83 aa)) folds into the SCAN box domain. Over residues 164-185 (GSPTGTDMETPSWTPQDTSLET) the composition is skewed to polar residues. 3 disordered regions span residues 164–196 (GSPT…KENG), 224–257 (YPRP…SLKG), and 281–300 (EPVP…GHQE). C2H2-type zinc fingers lie at residues 309-331 (YRCE…QRRH), 337-359 (FTCA…QKIH), 365-387 (FTCS…ERIH), and 393-415 (YECS…LRNH).

It is found in the nucleus. The protein resides in the chromosome. It localises to the telomere. In terms of biological role, embryonic stem (ES) cell-specific transcription factor required to regulate ES cell pluripotency. Binds telomeres and plays a key role in genomic stability in ES cells by regulating telomere elongation. Acts as an activator of spontaneous telomere sister chromatid exchange (T-SCE) and telomere elongation in undifferentiated ES cells. This chain is Zinc finger and SCAN domain-containing protein 4 (ZSCAN4), found in Ailuropoda melanoleuca (Giant panda).